The chain runs to 332 residues: Probable cytosolic iron-sulfur protein assembly protein 1 (332 aa).

WD repeat units follow at residues Gly-9–Thr-48, Gly-52–Leu-93, Gly-98–Glu-137, Asp-144–Val-183, Gly-188–Gly-230, Ala-257–Val-295, and Ala-302–Val-332.

It belongs to the WD repeat CIA1 family. Interacts with NAR1.

The protein resides in the cytoplasm. Its subcellular location is the nucleus. Essential component of the cytosolic iron-sulfur (Fe/S) protein assembly machinery. Required for the maturation of extramitochondrial Fe/S proteins. The protein is Probable cytosolic iron-sulfur protein assembly protein 1 of Yarrowia lipolytica (strain CLIB 122 / E 150) (Yeast).